A 558-amino-acid polypeptide reads, in one-letter code: Formate--tetrahydrofolate ligase (558 aa).

Residue 67–74 participates in ATP binding; that stretch reads TPAGEGKT.

The protein belongs to the formate--tetrahydrofolate ligase family.

The enzyme catalyses (6S)-5,6,7,8-tetrahydrofolate + formate + ATP = (6R)-10-formyltetrahydrofolate + ADP + phosphate. It functions in the pathway one-carbon metabolism; tetrahydrofolate interconversion. The protein is Formate--tetrahydrofolate ligase of Roseobacter denitrificans (strain ATCC 33942 / OCh 114) (Erythrobacter sp. (strain OCh 114)).